A 179-amino-acid polypeptide reads, in one-letter code: uncharacterized protein (179 aa).

This is an uncharacterized protein from Escherichia coli (strain K12).